The sequence spans 258 residues: Ribosomal RNA small subunit methyltransferase J (258 aa).

S-adenosyl-L-methionine contacts are provided by residues 106–107, 122–123, and aspartate 181; these read RD and ER.

This sequence belongs to the methyltransferase superfamily. RsmJ family.

The protein resides in the cytoplasm. The catalysed reaction is guanosine(1516) in 16S rRNA + S-adenosyl-L-methionine = N(2)-methylguanosine(1516) in 16S rRNA + S-adenosyl-L-homocysteine + H(+). Its function is as follows. Specifically methylates the guanosine in position 1516 of 16S rRNA. The polypeptide is Ribosomal RNA small subunit methyltransferase J (Pseudoalteromonas atlantica (strain T6c / ATCC BAA-1087)).